The chain runs to 96 residues: DNA-directed RNA polymerase subunit Rpo11 (96 aa).

It belongs to the archaeal Rpo11/eukaryotic RPB11/RPC19 RNA polymerase subunit family. As to quaternary structure, part of the RNA polymerase complex.

It localises to the cytoplasm. The catalysed reaction is RNA(n) + a ribonucleoside 5'-triphosphate = RNA(n+1) + diphosphate. Functionally, DNA-dependent RNA polymerase (RNAP) catalyzes the transcription of DNA into RNA using the four ribonucleoside triphosphates as substrates. The polypeptide is DNA-directed RNA polymerase subunit Rpo11 (Haloquadratum walsbyi (strain DSM 16790 / HBSQ001)).